We begin with the raw amino-acid sequence, 287 residues long: Probable aquaporin PIP1-4 (287 aa).

The residue at position 1 (M1) is an N-acetylmethionine. The tract at residues 1–36 is disordered; the sequence is MEGKEEDVRVGANKFPERQPIGTSAQSTDKDYKEPP. Topologically, residues 1 to 55 are cytoplasmic; it reads MEGKEEDVRVGANKFPERQPIGTSAQSTDKDYKEPPPAPLFEPGELSSWSFYRAG. Residues 56-76 traverse the membrane as a helical segment; sequence IAEFIATFLFLYITVLTVMGV. The Extracellular segment spans residues 77–92; that stretch reads KRAPNMCASVGIQGIA. Residues 93-113 form a helical membrane-spanning segment; sequence WAFGGMIFALVYCTAGISGGH. Residues 114–133 are Cytoplasmic-facing; the sequence is INPAVTFGLFLARKLSLTRA. The NPA 1 signature appears at 115-117; the sequence is NPA. The helical transmembrane segment at 134-154 threads the bilayer; it reads VFYMIMQCLGAICGAGVVKGF. Residues 155–175 are Extracellular-facing; sequence QPTPYQTLGGGANTVAHGYTK. Residues 176–196 form a helical membrane-spanning segment; the sequence is GSGLGAEIIGTFVLVYTVFSA. Residues 197-209 are Cytoplasmic-facing; the sequence is TDAKRSARDSHVP. Residues 210 to 230 form a helical membrane-spanning segment; the sequence is ILAPLPIGFAVFLVHLATIPI. Residues 231 to 257 are Extracellular-facing; the sequence is TGTGINPARSLGAAIIYNKDHSWDDHW. The NPA 2 motif lies at 236-238; that stretch reads NPA. The chain crosses the membrane as a helical span at residues 258-278; it reads IFWVGPFIGAALAALYHQIVI. Topologically, residues 279-287 are cytoplasmic; sequence RAIPFKSKS. A Phosphoserine modification is found at S285.

The protein belongs to the MIP/aquaporin (TC 1.A.8) family. PIP (TC 1.A.8.11) subfamily. As to expression, predominantly expressed in roots and green siliques. Also expressed above ground and in flower buds.

It localises to the cell membrane. In terms of biological role, aquaporins facilitate the transport of water and small neutral solutes across cell membranes. The polypeptide is Probable aquaporin PIP1-4 (PIP1.4) (Arabidopsis thaliana (Mouse-ear cress)).